A 61-amino-acid polypeptide reads, in one-letter code: Putative defensin-like protein 72 (61 aa).

Cystine bridges form between Cys21–Cys59, Cys25–Cys48, Cys34–Cys57, and Cys38–Cys58.

The protein belongs to the DEFL family.

The polypeptide is Putative defensin-like protein 72 (Arabidopsis thaliana (Mouse-ear cress)).